The sequence spans 204 residues: Guanylate kinase (204 aa).

The Guanylate kinase-like domain occupies 18-196; sequence PKLFTISAPA…SYEILKSIFI (179 aa). 25–32 contacts ATP; it reads APAGAGKT.

The protein belongs to the guanylate kinase family.

It localises to the cytoplasm. The enzyme catalyses GMP + ATP = GDP + ADP. Essential for recycling GMP and indirectly, cGMP. The polypeptide is Guanylate kinase (Chlamydia caviae (strain ATCC VR-813 / DSM 19441 / 03DC25 / GPIC) (Chlamydophila caviae)).